Consider the following 148-residue polypeptide: uncharacterized protein (148 aa).

Positions 4-65 constitute an HTH asnC-type domain; sequence MDKVDLQLIK…IPNLEKLNYM (62 aa). The H-T-H motif DNA-binding region spans 23–42; that stretch reads YRELAEMLGTTRQRVARKVD.

This is an uncharacterized protein from Pyrococcus furiosus (strain ATCC 43587 / DSM 3638 / JCM 8422 / Vc1).